The primary structure comprises 234 residues: Transcription factor ILR3 (234 aa).

The interval 34–85 is disordered; sequence QPIGVSSNSSAGVDGSAGNSEASKEPGSKKRGRCESSSATSSKACREKQRRD. Positions 36–54 are enriched in polar residues; it reads IGVSSNSSAGVDGSAGNSE. Positions 71 to 122 constitute a bHLH domain; it reads SATSSKACREKQRRDRLNDKFMELGAILEPGNPPKTDKAAILVDAVRMVTQL.

Homodimer. Interacts with BTS and BHLH47/PYE. As to expression, widely expressed throughout development, mostly in vasculatures.

Its subcellular location is the nucleus. Its function is as follows. Transcription factor. Plays a role in resistance to amide-linked indole-3-acetic acid (IAA) conjugates such as IAA-Leu and IAA-Phe. May regulate gene expression in response to metal homeostasis changes. The sequence is that of Transcription factor ILR3 (ILR3) from Arabidopsis thaliana (Mouse-ear cress).